The sequence spans 808 residues: Sucrose synthase 2 (808 aa).

Phosphoserine; by CPK is present on S10. Residues 272–749 (MMFNVVILSP…GLQRIYEKYT (478 aa)) form a GT-B glycosyltransferase region.

The protein belongs to the glycosyltransferase 1 family. Plant sucrose synthase subfamily. Homotetramer or heterotetramer with SUS1. Phosphorylated at Ser-10 by CPK23 in developing seeds. Predominantly expressed in the leaf tissues. Expressed in seeds, and at lower levels in roots. Expressed in leaf mesophyll and phloem (at protein level).

The catalysed reaction is an NDP-alpha-D-glucose + D-fructose = a ribonucleoside 5'-diphosphate + sucrose + H(+). With respect to regulation, activated by phosphorylation at Ser-10 by CPK23. Sucrose-cleaving enzyme that provides UDP-glucose and fructose for various metabolic pathways. Functions in developing seeds by supplying substrates for the biosynthesis of storage products. The chain is Sucrose synthase 2 (SUS2) from Oryza sativa subsp. japonica (Rice).